Reading from the N-terminus, the 392-residue chain is MQLRKLLLPGLLSVTLLSGCSLFSGEEDVVKMSPLPQVENQFTPTTVWSTSVGNGIGEFYSNLHPVMVDNVVYAADRAGVVKALNADDGKEIWSVNLGEKDGWFSRSSALLSGGVTVAGGHVYIGSEKAEVYALNTSDGTTAWQTKVAGEALSRPVVSDGIVLIHTSNGQLQALNQADGAIKWTVNLDMPSLSLRGESAPATAFGAAIVGGDNGRVSAVLMQQGQMIWQQRISQATGPTEIDRLSDVDTTPVVVNGVVYALAYNGNLTALDLRSGQIMWKRELGSVNDFIVDGDRIYLVDQNDRVLALTTDGGVTLWTQSDLLHRLLTSPVLYNGDLVVGDSEGYLHWINVDDGRFVAQQKVDSSGFLTEPTVADGKLLIQAKDGTVYAITR.

An N-terminal signal peptide occupies residues 1–19; it reads MQLRKLLLPGLLSVTLLSG. The N-palmitoyl cysteine moiety is linked to residue Cys-20. A lipid anchor (S-diacylglycerol cysteine) is attached at Cys-20.

The protein belongs to the BamB family. Part of the Bam complex, which is composed of the outer membrane protein BamA, and four lipoproteins BamB, BamC, BamD and BamE.

It localises to the cell outer membrane. Functionally, part of the outer membrane protein assembly complex, which is involved in assembly and insertion of beta-barrel proteins into the outer membrane. In Salmonella typhimurium (strain LT2 / SGSC1412 / ATCC 700720), this protein is Outer membrane protein assembly factor BamB.